Reading from the N-terminus, the 461-residue chain is Propionyl-CoA carboxylase regulator (461 aa).

An HTH cro/C1-type domain is found at 11-65; that stretch reads LRELRVKLGLTQKVFAERLGASLPYLNQMENNHRPVSATVVLALAQEFGVDVTKL. Positions 22–41 form a DNA-binding region, H-T-H motif; it reads QKVFAERLGASLPYLNQMEN.

It belongs to the short-chain fatty acyl-CoA assimilation regulator (ScfR) family.

Transcriptional regulator that controls propionyl-CoA assimilation through the methylmalonyl-CoA pathway via regulation of pccB expression. In Cereibacter sphaeroides (strain ATCC 17023 / DSM 158 / JCM 6121 / CCUG 31486 / LMG 2827 / NBRC 12203 / NCIMB 8253 / ATH 2.4.1.) (Rhodobacter sphaeroides), this protein is Propionyl-CoA carboxylase regulator.